The primary structure comprises 460 residues: Argininosuccinate lyase (460 aa).

It belongs to the lyase 1 family. Argininosuccinate lyase subfamily.

It localises to the cytoplasm. It carries out the reaction 2-(N(omega)-L-arginino)succinate = fumarate + L-arginine. Its pathway is amino-acid biosynthesis; L-arginine biosynthesis; L-arginine from L-ornithine and carbamoyl phosphate: step 3/3. This chain is Argininosuccinate lyase, found in Limosilactobacillus fermentum (strain NBRC 3956 / LMG 18251) (Lactobacillus fermentum).